A 448-amino-acid chain; its full sequence is Phosphoglucosamine mutase (448 aa).

Serine 100 serves as the catalytic Phosphoserine intermediate. Serine 100, aspartate 240, aspartate 242, and aspartate 244 together coordinate Mg(2+). At serine 100 the chain carries Phosphoserine.

This sequence belongs to the phosphohexose mutase family. Mg(2+) is required as a cofactor. In terms of processing, activated by phosphorylation.

The catalysed reaction is alpha-D-glucosamine 1-phosphate = D-glucosamine 6-phosphate. In terms of biological role, catalyzes the conversion of glucosamine-6-phosphate to glucosamine-1-phosphate. The sequence is that of Phosphoglucosamine mutase from Clostridium acetobutylicum (strain ATCC 824 / DSM 792 / JCM 1419 / IAM 19013 / LMG 5710 / NBRC 13948 / NRRL B-527 / VKM B-1787 / 2291 / W).